A 315-amino-acid chain; its full sequence is Protein OPG185 (315 aa).

Residues 1 to 16 (MTRLPILLLLISLVYA) form the signal peptide. Residues 17–121 (TPFPQTSKKI…NDTDKVDYEE (105 aa)) enclose the Ig-like V-type domain. Topologically, residues 17-279 (TPFPQTSKKI…SNYKTKDFVE (263 aa)) are virion surface. An intrachain disulfide couples C34 to C103. N-linked (GlcNAc...) asparagine; by host glycans are attached at residues N37, N69, N112, and N161. Polar residues predominate over residues 191–202 (SINTVSASSGES). Residues 191 to 213 (SINTVSASSGESTTDETPEPITD) form a disordered region. N-linked (GlcNAc...) asparagine; by host glycosylation is present at N254. The helical transmembrane segment at 280 to 303 (IFGITALIILSAVAIFCITYYIYN) threads the bilayer. Over 304-315 (KRSRKYKTENKV) the chain is Intravirion.

Belongs to the orthopoxvirus OPG185 family. Heterodimerizes with OPG040. The heterodimer OPG185-OPG040 interacts with components of the entry fusion complex OPG143 and OPG094. Heterodimer with C3/VPC protein; disulfide-linked. Post-translationally, glycosylated; contains phosphate and sulfate-substituted glycans. O-glycosylation is required for hemagglutination and hemadsorption activities of infected cell membranes.

The protein resides in the virion membrane. Its subcellular location is the host membrane. Functionally, prevents cell to cell fusion by interacting with and directing the viral OPG040 protein on the host plasma membrane. The OPG185-OPG040 complex associates with components of the entry fusion complex (EFC) presumably to avoid superinfection and syncytium formation. Via its interaction with C3/VCP protein, protects the infected cell and probably also the extracellular enveloped virus from complement attack. The polypeptide is Protein OPG185 (OPG185) (Homo sapiens (Human)).